Consider the following 166-residue polypeptide: Ubiquitin-fold modifier-conjugating enzyme 1 (166 aa).

The active-site Glycyl thioester intermediate is the Cys-116.

The protein belongs to the ubiquitin-conjugating enzyme family. UFC1 subfamily.

In terms of biological role, E2-like enzyme which forms an intermediate with UFM1 via a thioester linkage. In Monosiga brevicollis (Choanoflagellate), this protein is Ubiquitin-fold modifier-conjugating enzyme 1.